The primary structure comprises 409 residues: Putative protein disulfide-isomerase DDB_G0275025 (409 aa).

Positions 1 to 21 (MKLINICIFIFAIICIESTFG) are cleaved as a signal peptide. The region spanning 28–140 (NVINLTKKNF…AKFSLAKLPS (113 aa)) is the Thioredoxin domain. A disulfide bond links cysteine 57 and cysteine 60. A disordered region spans residues 245–273 (SNNDNNNNNNNNNNEESTKTTTTEKDPAS). A compositionally biased stretch (low complexity) spans 247–259 (NDNNNNNNNNNNE). A compositionally biased stretch (basic and acidic residues) spans 260 to 273 (ESTKTTTTEKDPAS). Positions 406–409 (KDEL) match the Prevents secretion from ER motif.

Belongs to the protein disulfide isomerase family.

The protein resides in the endoplasmic reticulum lumen. The catalysed reaction is Catalyzes the rearrangement of -S-S- bonds in proteins.. The sequence is that of Putative protein disulfide-isomerase DDB_G0275025 from Dictyostelium discoideum (Social amoeba).